We begin with the raw amino-acid sequence, 880 residues long: Vacuole morphology and inheritance protein 14 (880 aa).

HEAT repeat units lie at residues 82 to 119 and 243 to 280; these read RYLRNILPPVLACFGDQNDQVRFYACESLYNIAKIAKG and SYLPSFLGGLFTFLGDSHKDVRTVTHTLMDSLLHEVDR. The disordered stretch occupies residues 333 to 373; it reads SKPLSMETDDTKLSNTNETDDERHLTSQEQLLDSEATSQEP. Polar residues predominate over residues 359-372; the sequence is SQEQLLDSEATSQE. HEAT repeat units follow at residues 388–425, 429–466, and 517–554; these read LNFPEVITVLVNNLASSEAEIQLIALHWIQVILSISPN, PFLSKILSVLLKLLSDSDPHITEIAQLVNGQLLSLCSS, and KHNDSMFLTLLKSLSNRDSVLIEKALSLLQSLCSDSND. Phosphoserine occurs at positions 767, 805, and 867. The disordered stretch occupies residues 850-880; that stretch reads EMESPNDNSSVILKDSGSLPFNRNVSDKLKK.

The protein belongs to the VAC14 family. Component of the PI(3,5)P2 regulatory complex, composed of ATG18, FIG4, FAB1, VAC14 and VAC7. VAC14 nucleates the assembly of the complex and serves as a scaffold.

The protein localises to the vacuole membrane. The PI(3,5)P2 regulatory complex regulates both the synthesis and turnover of phosphatidylinositol 3,5-bisphosphate (PtdIns(3,5)P2). Regulates the synthesis of PtdIns(3,5)P2 by positive activation of FAB1 and by controlling FIG4 localization. Required for FIG4-mediated turnover of PtdIns(3,5)P2 after hyperosmotic shock. Essential for the control of trafficking of some proteins to the vacuole lumen via the multivesicular body (MVB), and for maintenance of vacuole size and acidity. The sequence is that of Vacuole morphology and inheritance protein 14 (VAC14) from Saccharomyces cerevisiae (strain ATCC 204508 / S288c) (Baker's yeast).